A 151-amino-acid chain; its full sequence is Small ribosomal subunit protein uS15 (151 aa).

Residues 1-20 (MARLHSGKRGSSGSTRPLRT) form a disordered region.

It belongs to the universal ribosomal protein uS15 family. As to quaternary structure, part of the 30S ribosomal subunit.

This is Small ribosomal subunit protein uS15 from Methanococcus maripaludis (strain C5 / ATCC BAA-1333).